The sequence spans 403 residues: Coenzyme A biosynthesis bifunctional protein CoaBC (403 aa).

Residues 1-197 (MISEIMHPTK…GNNLKKEGNR (197 aa)) form a phosphopantothenoylcysteine decarboxylase region. The tract at residues 198 to 403 (VLILNGGTVE…VEKVKKLVKS (206 aa)) is phosphopantothenate--cysteine ligase. Positions 285, 294, and 327 each coordinate CTP.

The protein in the N-terminal section; belongs to the HFCD (homo-oligomeric flavin containing Cys decarboxylase) superfamily. This sequence in the C-terminal section; belongs to the PPC synthetase family. Homododecamer. The CoaC domain is responsible for dodecamer formation. Requires Mg(2+) as cofactor. FMN serves as cofactor.

It carries out the reaction N-[(R)-4-phosphopantothenoyl]-L-cysteine + H(+) = (R)-4'-phosphopantetheine + CO2. It catalyses the reaction (R)-4'-phosphopantothenate + L-cysteine + CTP = N-[(R)-4-phosphopantothenoyl]-L-cysteine + CMP + diphosphate + H(+). Its pathway is cofactor biosynthesis; coenzyme A biosynthesis. Catalyzes two sequential steps in the biosynthesis of coenzyme A. In the first step cysteine is conjugated to 4'-phosphopantothenate to form 4-phosphopantothenoylcysteine. In the second step the latter compound is decarboxylated to form 4'-phosphopantotheine. The polypeptide is Coenzyme A biosynthesis bifunctional protein CoaBC (Methanocaldococcus jannaschii (strain ATCC 43067 / DSM 2661 / JAL-1 / JCM 10045 / NBRC 100440) (Methanococcus jannaschii)).